We begin with the raw amino-acid sequence, 294 residues long: S-adenosylmethionine uptake transporter (294 aa).

10 consecutive transmembrane segments (helical) span residues 4–24, 39–59, 74–91, 98–118, 121–141, 148–168, 177–197, 207–227, 237–257, and 260–280; these read ALKT…SSSA, FEVA…FVFY, ILRG…TYGL, TATV…VFFL, NIIW…VVTL, FNPE…LDII, SMIS…LPVA, FELA…FFLL, ATAP…YFIF, and FPDK…LFII. EamA domains lie at 21–141 and 160–280; these read SSSA…VVTL and ISFA…LFII.

Belongs to the drug/metabolite transporter (DMT) superfamily. 10 TMS drug/metabolite exporter (DME) (TC 2.A.7.3) family.

The protein localises to the cell inner membrane. In terms of biological role, transports S-adenosylmethionine. The protein is S-adenosylmethionine uptake transporter (sam) of Rickettsia felis (strain ATCC VR-1525 / URRWXCal2) (Rickettsia azadi).